An 843-amino-acid chain; its full sequence is OTU domain-containing protein 7B (843 aa).

The interval 50-88 (GNLPPSFSEGSGGSRTPEKGFSDREPTRPPRPILQRQDD) is disordered. Residues 65–77 (TPEKGFSDREPTR) are compositionally biased toward basic and acidic residues. Ser-100 is modified (phosphoserine). Positions 152 to 401 (ERDLIEQSML…AVDPGKGWEW (250 aa)) are TRAF-binding. A catalytic region spans residues 167-440 (AGRLNWWVSV…VKWIPLSSDA (274 aa)). The 183-residue stretch at 183–365 (LLPLATTGDG…QAHFSALVSM (183 aa)) folds into the OTU domain. The regulatory loop stretch occupies residues 187–193 (ATTGDGN). Asp-191 is a catalytic residue. Cys-194 (nucleophile) is an active-site residue. His-358 (proton acceptor) is an active-site residue. Disordered stretches follow at residues 442-587 (APLA…GGSK) and 652-711 (IMNG…CQEP). Composition is skewed to basic and acidic residues over residues 456–471 (DEPR…DKES) and 488–500 (SKRD…KRAD). Ser-464, Ser-467, and Ser-471 each carry phosphoserine. Residues 483 to 498 (RRKEKSKRDREKDKKR) carry the Nuclear localization signal motif. A compositionally biased stretch (gly residues) spans 531 to 543 (KPGGVGTGLGGSS). Positions 665-675 (KKPEPDAREEQ) are enriched in basic and acidic residues. At Thr-729 the chain carries Phosphothreonine. The tract at residues 732-792 (RQCPPGRPYP…PEPDGWAGGL (61 aa)) is disordered. The segment at 796–831 (PPTQTKCKQPNCSFYGHPETNNFCSCCYREELRRRE) adopts an A20-type zinc-finger fold. Positions 802, 807, 819, and 822 each coordinate Zn(2+).

It belongs to the peptidase C64 family. In terms of assembly, interacts with ZAP70 in activated T cells, but not in resting T cells. Interacts with TRAF3. Interacts with TRAF6. Interacts with PARK7, leading to inhibit deubiquitinase activity. Interacts with EGFR, ITCH and NEDD4. In terms of processing, phosphorylated by EGFR. Widely expressed. Abundant in kidney, heart and fetal liver. Expressed differentially among B-cells at distinct developmental stages. Higher expression seen in primary immature B-cells as compared to the mature cells.

It localises to the cytoplasm. The protein localises to the nucleus. The catalysed reaction is Thiol-dependent hydrolysis of ester, thioester, amide, peptide and isopeptide bonds formed by the C-terminal Gly of ubiquitin (a 76-residue protein attached to proteins as an intracellular targeting signal).. With respect to regulation, deubiquitinase activity is inhibited following interaction with PARK7. Its function is as follows. Negative regulator of the non-canonical NF-kappa-B pathway that acts by mediating deubiquitination of TRAF3, an inhibitor of the NF-kappa-B pathway, thereby acting as a negative regulator of B-cell responses. In response to non-canonical NF-kappa-B stimuli, deubiquitinates 'Lys-48'-linked polyubiquitin chains of TRAF3, preventing TRAF3 proteolysis and over-activation of non-canonical NF-kappa-B. Negatively regulates mucosal immunity against infections. Deubiquitinates ZAP70, and thereby regulates T cell receptor (TCR) signaling that leads to the activation of NF-kappa-B. Plays a role in T cell homeostasis and is required for normal T cell responses, including production of IFNG and IL2. Mediates deubiquitination of EGFR. Has deubiquitinating activity toward 'Lys-11', 'Lys-48' and 'Lys-63'-linked polyubiquitin chains. Has a much higher catalytic rate with 'Lys-11'-linked polyubiquitin chains (in vitro); however the physiological significance of these data are unsure. Hydrolyzes both linear and branched forms of polyubiquitin. Acts as a regulator of mTORC1 and mTORC2 assembly by mediating 'Lys-63'-linked deubiquitination of MLST8, thereby promoting assembly of the mTORC2 complex, while inibiting formation of the mTORC1 complex. This chain is OTU domain-containing protein 7B (OTUD7B), found in Homo sapiens (Human).